A 612-amino-acid chain; its full sequence is Dihydroxy-acid dehydratase (612 aa).

D81 serves as a coordination point for Mg(2+). C122 is a binding site for [2Fe-2S] cluster. Mg(2+) is bound by residues D123 and K124. K124 is modified (N6-carboxylysine). C193 contributes to the [2Fe-2S] cluster binding site. E489 provides a ligand contact to Mg(2+). S515 (proton acceptor) is an active-site residue.

The protein belongs to the IlvD/Edd family. As to quaternary structure, homodimer. The cofactor is [2Fe-2S] cluster. It depends on Mg(2+) as a cofactor.

It catalyses the reaction (2R)-2,3-dihydroxy-3-methylbutanoate = 3-methyl-2-oxobutanoate + H2O. The catalysed reaction is (2R,3R)-2,3-dihydroxy-3-methylpentanoate = (S)-3-methyl-2-oxopentanoate + H2O. The protein operates within amino-acid biosynthesis; L-isoleucine biosynthesis; L-isoleucine from 2-oxobutanoate: step 3/4. Its pathway is amino-acid biosynthesis; L-valine biosynthesis; L-valine from pyruvate: step 3/4. Its function is as follows. Functions in the biosynthesis of branched-chain amino acids. Catalyzes the dehydration of (2R,3R)-2,3-dihydroxy-3-methylpentanoate (2,3-dihydroxy-3-methylvalerate) into 2-oxo-3-methylpentanoate (2-oxo-3-methylvalerate) and of (2R)-2,3-dihydroxy-3-methylbutanoate (2,3-dihydroxyisovalerate) into 2-oxo-3-methylbutanoate (2-oxoisovalerate), the penultimate precursor to L-isoleucine and L-valine, respectively. The sequence is that of Dihydroxy-acid dehydratase from Ectopseudomonas mendocina (strain ymp) (Pseudomonas mendocina).